A 242-amino-acid polypeptide reads, in one-letter code: Putative prolyl 4-hydroxylase (242 aa).

In terms of domain architecture, Fe2OG dioxygenase spans 128–238 (NAEDLQVVRY…KWIANLWFRE (111 aa)).

The protein belongs to the P4HA family. It depends on Fe cation as a cofactor. L-ascorbate is required as a cofactor.

The protein localises to the virion. It carries out the reaction L-prolyl-[collagen] + 2-oxoglutarate + O2 = trans-4-hydroxy-L-prolyl-[collagen] + succinate + CO2. Its function is as follows. May catalyze the post-translational formation of 4-hydroxyproline in -Xaa-Pro-Gly- sequences in the 6 collagen-like proteins of Mimivirus. This chain is Putative prolyl 4-hydroxylase, found in Acanthamoeba polyphaga mimivirus (APMV).